Reading from the N-terminus, the 385-residue chain is MSSIPNINWNDPNNGKSNTSRQSQPQPQLPSNVSPPNSRAVPTSGSIGGPQYGSSQFSNEYSRNPNTIGGPPFPLQSNQRGYMPNTGYPVQQTAQQRSGDKLQQVHSQQQQQQQQPLYQQYPPQSVGYLAGDVYNPQHQEYVQMNQLPNQHYNLQQRQQAQGQQLKSQLNEQNAMMSASTQQYPVQDFTNPYPNAQNPAEQQQQQQPLRTQSQQWDGYQSQPLYSAAGNTIPSSIQQQIPPQNLSPSEQQQVKQQQPSPPEQGTKKKPGRKPKLRKLSESSSETPQVPKTASSSSSSPTAVNSGKPITKRSRMGCLTCRQRKKRCCETRPRCTECTRLRLNCTWPKPGTEHKNKPKDQKDDENTIEHAEFGRIKVLRGIVEYRSK.

Residues 1 to 19 show a composition bias toward polar residues; that stretch reads MSSIPNINWNDPNNGKSNT. Disordered regions lie at residues 1 to 117, 154 to 216, and 233 to 308; these read MSSI…QQPL, LQQR…QQWD, and SSIQ…KPIT. Low complexity predominate over residues 20–38; the sequence is SRQSQPQPQLPSNVSPPNS. Composition is skewed to polar residues over residues 52 to 67 and 88 to 97; these read YGSS…NPNT and YPVQQTAQQR. Low complexity-rich tracts occupy residues 102–117 and 154–169; these read LQQV…QQPL and LQQR…KSQL. A compositionally biased stretch (polar residues) spans 170 to 200; the sequence is NEQNAMMSASTQQYPVQDFTNPYPNAQNPAE. Low complexity-rich tracts occupy residues 201 to 214 and 233 to 256; these read QQQQ…QSQQ and SSIQ…KQQQ. Basic residues predominate over residues 265 to 275; sequence KKKPGRKPKLR. Polar residues predominate over residues 279-291; that stretch reads ESSSETPQVPKTA. The segment at residues 315–342 is a DNA-binding region (zn(2)-C6 fungal-type); it reads CLTCRQRKKRCCETRPRCTECTRLRLNC. Residues 345-364 form a disordered region; sequence PKPGTEHKNKPKDQKDDENT. Basic and acidic residues predominate over residues 348-364; the sequence is GTEHKNKPKDQKDDENT.

In terms of assembly, interacts with EFG1.

The protein localises to the nucleus. Transcriptional regulator of the switch between 2 heritable states, the white and opaque states. These 2 cell types differ in many characteristics, including cell structure, mating competence, and virulence. Each state is heritable for many generations, and switching between states occurs stochastically, at low frequency. Contributes to formation of the opaque state, but is not necessary for heritability of the opaque state. Plays a role in cell adhesion and pseudohyphal growth. Involved in acquisition of drug resistance and acts as a repressor of beta-glucan synthesis, thus negatively regulating cell wall integrity. Plays a role in adherence, invasion and damage to oral epithelial cells. This is Zinc cluster transcription factor CZF1 (CZF1) from Candida albicans (strain SC5314 / ATCC MYA-2876) (Yeast).